The primary structure comprises 390 residues: Leucine aminopeptidase 1 (390 aa).

An N-terminal signal peptide occupies residues M1–S18. The propeptide occupies Y19–V90. A glycan (N-linked (GlcNAc...) asparagine) is linked at N120. Residues H190, D209, E248, and D275 each contribute to the Zn(2+) site. The cysteines at positions 324 and 328 are disulfide-linked. H357 contributes to the Zn(2+) binding site.

This sequence belongs to the peptidase M28 family. M28E subfamily. As to quaternary structure, monomer. Zn(2+) is required as a cofactor.

It is found in the secreted. Functionally, extracellular aminopeptidase that allows assimilation of proteinaceous substrates. This Emericella nidulans (strain FGSC A4 / ATCC 38163 / CBS 112.46 / NRRL 194 / M139) (Aspergillus nidulans) protein is Leucine aminopeptidase 1 (lap1).